Here is a 103-residue protein sequence, read N- to C-terminus: Small ribosomal subunit protein uS10 (103 aa).

The protein belongs to the universal ribosomal protein uS10 family. In terms of assembly, part of the 30S ribosomal subunit.

Functionally, involved in the binding of tRNA to the ribosomes. The sequence is that of Small ribosomal subunit protein uS10 from Bordetella parapertussis (strain 12822 / ATCC BAA-587 / NCTC 13253).